A 522-amino-acid chain; its full sequence is MPRGFLVKRSKKSTPVSYRIRGGEDGDRALLLLPGCGGARASPPAPGPGPVPGPLQPPPPTERAHAALAAALACAPGPPPPPPGLRAAHFGNPEAAHPAPLYSPTRPVSREHEKHKYFERSFNLGSPVSAESFPTPAALLVGGGGGGGGGGANGAGGGGTCSGDPLLFAPAELKMGTAFSAAAEAARGPGPGPPLPPAAALRPPGKRPSPPASAAAAAEPPAKVAKAPGSKKPKAIRKLHFEDEVTTSPVLGLKIKEGPVEAPRGRAGGAARPLGEFICQLCKEEYADPFALAQHKCSRIVRVEYRCPECAKVFSCPANLASHRRWHKPRPAPAAARACEPETPARAEAREATGGGGSDRDTPSPGGVSESGSEDGLYECHHCAKKFRRQAYLRKHLLAHHQALQAKGAPPPAPPAEDLLALYPGPDEKVPQEAAGDGEAAGVLGLSASAECHLCPVCGETFPSKGAQERHLRLLHAAQVFPCKYCPATFYSSPGLTRHINKCHPSENRQVILLQVPVRPAC.

The span at 1–12 shows a compositional bias: basic residues; that stretch reads MPRGFLVKRSKK. Positions 1-20 are SNAG domain; it reads MPRGFLVKRSKKSTPVSYRI. Disordered stretches follow at residues 1-112 and 182-235; these read MPRG…SREH and AAEA…KPKA. The required and sufficient for interaction with KDM1A stretch occupies residues 2 to 7; that stretch reads PRGFLV. The necessary for interaction with CCND1 stretch occupies residues 43–57; the sequence is PPAPGPGPVPGPLQP. The span at 43–61 shows a compositional bias: pro residues; it reads PPAPGPGPVPGPLQPPPPT. Composition is skewed to low complexity over residues 66-75 and 212-228; these read AALAAALACA and ASAA…AKAP. The C2H2-type 1; atypical zinc finger occupies 277-297; that stretch reads FICQLCKEEYADPFALAQHKC. A C2H2-type 2 zinc finger spans residues 305 to 327; that stretch reads YRCPECAKVFSCPANLASHRRWH. The interval 325–373 is disordered; the sequence is RWHKPRPAPAAARACEPETPARAEAREATGGGGSDRDTPSPGGVSESGS. Residues 339–351 show a composition bias toward basic and acidic residues; the sequence is CEPETPARAEARE. C2H2-type zinc fingers lie at residues 378–400, 453–476, and 481–504; these read YECH…LLAH, HLCP…RLLH, and FPCK…NKCH.

Belongs to the INSM1 family. In terms of assembly, interacts (via the N-terminal region) with CCND1 (via cyclin N-terminal domain); the interaction competes with the binding of CCND1 to CDK4 during cell cycle progression and increases its transcriptional repressor activity. Interacts with HDAC3; the interaction increases its transcriptional repressor activity. Interacts (via the SNAG domain) with HDAC1. Interacts (via the SNAG domain) with HDAC2. Interacts (via the SNAG domain) with KDM1A. Interacts (via the SNAG domain) with RCOR1. Interacts with SORBS1.

The protein localises to the nucleus. Sequence-specific DNA-binding transcriptional regulator that plays a key role in neurogenesis and neuroendocrine cell differentiation during embryonic and/or fetal development. Binds to the consensus sequence 5'-[TG][TC][TC][TT][GA]GGG[CG]A-3' in target promoters. Acts as a transcriptional repressor of NEUROD1 and INS expression via its interaction with cyclin CCND1 in a cell cycle-independent manner. Negatively regulates skeletal muscle-specific gene expression in endocrine cells of the pituitary by inhibiting the Notch signaling pathway. Represses target gene transcription by recruiting chromatin-modifying factors, such as HDAC1, HDAC2, HDAC3, KDM1A and RCOR1 histone deacetylases. Binds to its own promoter, suggesting autoregulation as a self-control feedback mechanism. Competes with histone H3 for the same binding site on the histone demethylase complex formed by KDM1A and RCOR1, and thereby inhibits demethylation of histone H3 at 'Lys-4'. Promotes the generation and expansion of neuronal basal progenitor cells in the developing neocortex. Involved in the differentiation of endocrine cells of the developing anterior pituitary gland, of the pancreas and intestine, and of sympatho-adrenal cells in the peripheral nervous system. Promotes cell cycle signaling arrest and inhibition of cellular proliferation. The protein is Insulinoma-associated protein 1 (INSM1) of Bos taurus (Bovine).